A 485-amino-acid chain; its full sequence is Phosphoglucosamine mutase (485 aa).

The active-site Phosphoserine intermediate is S133. Positions 133, 274, 276, and 278 each coordinate Mg(2+). S133 bears the Phosphoserine mark.

It belongs to the phosphohexose mutase family. The cofactor is Mg(2+). Activated by phosphorylation.

It catalyses the reaction alpha-D-glucosamine 1-phosphate = D-glucosamine 6-phosphate. Its function is as follows. Catalyzes the conversion of glucosamine-6-phosphate to glucosamine-1-phosphate. The chain is Phosphoglucosamine mutase from Crocosphaera subtropica (strain ATCC 51142 / BH68) (Cyanothece sp. (strain ATCC 51142)).